The sequence spans 331 residues: Glycerol-3-phosphate dehydrogenase [NAD(P)+] (331 aa).

S11, F12, R32, and K106 together coordinate NADPH. Sn-glycerol 3-phosphate contacts are provided by K106, G134, and S136. A138 serves as a coordination point for NADPH. 5 residues coordinate sn-glycerol 3-phosphate: K189, D242, S252, R253, and N254. The active-site Proton acceptor is the K189. R253 lines the NADPH pocket. V277 and E279 together coordinate NADPH.

It belongs to the NAD-dependent glycerol-3-phosphate dehydrogenase family.

The protein resides in the cytoplasm. The enzyme catalyses sn-glycerol 3-phosphate + NAD(+) = dihydroxyacetone phosphate + NADH + H(+). It carries out the reaction sn-glycerol 3-phosphate + NADP(+) = dihydroxyacetone phosphate + NADPH + H(+). Its pathway is membrane lipid metabolism; glycerophospholipid metabolism. In terms of biological role, catalyzes the reduction of the glycolytic intermediate dihydroxyacetone phosphate (DHAP) to sn-glycerol 3-phosphate (G3P), the key precursor for phospholipid synthesis. In Clostridium perfringens (strain SM101 / Type A), this protein is Glycerol-3-phosphate dehydrogenase [NAD(P)+].